A 554-amino-acid chain; its full sequence is Probable ATP-binding cassette sub-family F member 3 homolog (554 aa).

ABC transporter domains follow at residues 89-285 (GDLH…ASAR) and 351-554 (IEFV…GLGV). Residues 122–129 (GRNGIGKT) and 383–390 (GANGQGKS) contribute to the ATP site.

The protein belongs to the ABC transporter superfamily. ABCF family. EF3 subfamily.

The chain is Probable ATP-binding cassette sub-family F member 3 homolog from Encephalitozoon cuniculi (strain GB-M1) (Microsporidian parasite).